A 315-amino-acid polypeptide reads, in one-letter code: Homoserine kinase (315 aa).

97–107 (PPARGLGSSAT) contacts ATP.

The protein belongs to the GHMP kinase family. Homoserine kinase subfamily.

It localises to the cytoplasm. The catalysed reaction is L-homoserine + ATP = O-phospho-L-homoserine + ADP + H(+). The protein operates within amino-acid biosynthesis; L-threonine biosynthesis; L-threonine from L-aspartate: step 4/5. Functionally, catalyzes the ATP-dependent phosphorylation of L-homoserine to L-homoserine phosphate. This chain is Homoserine kinase, found in Synechococcus sp. (strain CC9311).